Consider the following 365-residue polypeptide: Heat-inducible transcription repressor HrcA (365 aa).

It belongs to the HrcA family.

Negative regulator of class I heat shock genes (grpE-dnaK-dnaJ and groELS operons). Prevents heat-shock induction of these operons. This chain is Heat-inducible transcription repressor HrcA, found in Trichormus variabilis (strain ATCC 29413 / PCC 7937) (Anabaena variabilis).